Reading from the N-terminus, the 457-residue chain is Siroheme synthase (457 aa).

Residues 1–204 (MDHLPIFCQL…NDQKAITETT (204 aa)) form a precorrin-2 dehydrogenase /sirohydrochlorin ferrochelatase region. NAD(+) contacts are provided by residues 22–23 (DV) and 43–44 (LA). S128 is modified (phosphoserine). Residues 216-457 (GEVVLVGAGP…RDKLNWFSNH (242 aa)) form a uroporphyrinogen-III C-methyltransferase region. P225 is a binding site for S-adenosyl-L-methionine. D248 serves as the catalytic Proton acceptor. The Proton donor role is filled by K270. Residues 301–303 (GGD), I306, 331–332 (TA), M382, and G411 each bind S-adenosyl-L-methionine.

The protein in the N-terminal section; belongs to the precorrin-2 dehydrogenase / sirohydrochlorin ferrochelatase family. This sequence in the C-terminal section; belongs to the precorrin methyltransferase family.

It carries out the reaction uroporphyrinogen III + 2 S-adenosyl-L-methionine = precorrin-2 + 2 S-adenosyl-L-homocysteine + H(+). The catalysed reaction is precorrin-2 + NAD(+) = sirohydrochlorin + NADH + 2 H(+). The enzyme catalyses siroheme + 2 H(+) = sirohydrochlorin + Fe(2+). Its pathway is cofactor biosynthesis; adenosylcobalamin biosynthesis; precorrin-2 from uroporphyrinogen III: step 1/1. It functions in the pathway cofactor biosynthesis; adenosylcobalamin biosynthesis; sirohydrochlorin from precorrin-2: step 1/1. It participates in porphyrin-containing compound metabolism; siroheme biosynthesis; precorrin-2 from uroporphyrinogen III: step 1/1. The protein operates within porphyrin-containing compound metabolism; siroheme biosynthesis; siroheme from sirohydrochlorin: step 1/1. Its pathway is porphyrin-containing compound metabolism; siroheme biosynthesis; sirohydrochlorin from precorrin-2: step 1/1. Functionally, multifunctional enzyme that catalyzes the SAM-dependent methylations of uroporphyrinogen III at position C-2 and C-7 to form precorrin-2 via precorrin-1. Then it catalyzes the NAD-dependent ring dehydrogenation of precorrin-2 to yield sirohydrochlorin. Finally, it catalyzes the ferrochelation of sirohydrochlorin to yield siroheme. The polypeptide is Siroheme synthase (Escherichia coli O17:K52:H18 (strain UMN026 / ExPEC)).